Reading from the N-terminus, the 94-residue chain is Aspartyl/glutamyl-tRNA(Asn/Gln) amidotransferase subunit C (94 aa).

It belongs to the GatC family. Heterotrimer of A, B and C subunits.

The catalysed reaction is L-glutamyl-tRNA(Gln) + L-glutamine + ATP + H2O = L-glutaminyl-tRNA(Gln) + L-glutamate + ADP + phosphate + H(+). The enzyme catalyses L-aspartyl-tRNA(Asn) + L-glutamine + ATP + H2O = L-asparaginyl-tRNA(Asn) + L-glutamate + ADP + phosphate + 2 H(+). Allows the formation of correctly charged Asn-tRNA(Asn) or Gln-tRNA(Gln) through the transamidation of misacylated Asp-tRNA(Asn) or Glu-tRNA(Gln) in organisms which lack either or both of asparaginyl-tRNA or glutaminyl-tRNA synthetases. The reaction takes place in the presence of glutamine and ATP through an activated phospho-Asp-tRNA(Asn) or phospho-Glu-tRNA(Gln). The chain is Aspartyl/glutamyl-tRNA(Asn/Gln) amidotransferase subunit C from Campylobacter jejuni subsp. doylei (strain ATCC BAA-1458 / RM4099 / 269.97).